A 632-amino-acid chain; its full sequence is LTPAQQQLLLQQAQAQAQLLAAAVQQHSASQQHSAAGATISASAATPMTQIPLSQPIQIAQDLQQLQQLQQQNLNLQQFVLVHPTTNLQPAQFIISQTPQGQQGLLQAQNLLTQLPQQSQANLLQPQPSITLTSQPTTPTRTIAATPIQTLPQSQTTPKRIDTPSLEEPSDLEELEQFAKTFKQRRIKLGFTQGDVGLAMGKLYGNDFSQTTISRFEALNLSFKNMCKLKPLLEKWLNDAENLSSDSTASSPSALNSPGLGAEGLNRRRKKRTSIETNIRVALEKSFMENQKPTSEDITLIAEQLNMEKEVIRVWFCNRRQKEKRINPPSSGGTSSSPIKAIFPSPTSLVATTPSLVTSSTATTLTVNPVLPLTSAAMTNLSLTGTTDSTSNNTATVISTAPPASSAVTSPSLSPSPSASASTSEASSASETSTTQTTSTPLPSPLGASQVMVTASGLQTAAAAALQGAAQLPANASLAAMAAAAGLNPGLMAPSQFAAGGALLSLNPGTLGGALSPALMSNSTLATIQALASSGSLPITSLDATGNLVFANAGGAPNIVTAPLFLNPQNLSLLTSNPVSLVSAAAASTGNSAPTASLHASSTSTESIQNSLFTVASASGAASTTTAASKAQ.

2 positions are modified to phosphothreonine: Thr157 and Thr163. One can recognise a POU-specific domain in the interval 167-241 (EEPSDLEELE…LLEKWLNDAE (75 aa)). Residue Ser170 is modified to Phosphoserine. Residues 243 to 258 (LSSDSTASSPSALNSP) show a composition bias toward low complexity. Residues 243–273 (LSSDSTASSPSALNSPGLGAEGLNRRRKKRT) are disordered. Residues 268–327 (RRKKRTSIETNIRVALEKSFMENQKPTSEDITLIAEQLNMEKEVIRVWFCNRRQKEKRIN) constitute a DNA-binding region (homeobox). 2 positions are modified to phosphoserine: Ser274 and Ser337. The disordered stretch occupies residues 385–448 (GTTDSTSNNT…STPLPSPLGA (64 aa)). The span at 394 to 441 (TATVISTAPPASSAVTSPSLSPSPSASASTSEASSASETSTTQTTSTP) shows a compositional bias: low complexity.

This sequence belongs to the POU transcription factor family. Class-2 subfamily. In terms of assembly, interacts with POU2AF1; the interaction increases POU2F1 transactivation activity. Interacts with NR3C1, AR, PGR and HCFC1. Post-translationally, phosphorylated by PRKDC. As to expression, widely expressed.

The protein resides in the nucleus. Transcription factor that binds to the octamer motif (5'-ATTTGCAT-3') and activates the promoters of the genes for some small nuclear RNAs (snRNA) and of genes such as those for histone H2B and immunoglobulins. Modulates transcription transactivation by NR3C1, AR and PGR. The polypeptide is POU domain, class 2, transcription factor 1 (Pou2f1) (Rattus norvegicus (Rat)).